The following is a 1472-amino-acid chain: ABC transporter FGM5 (1472 aa).

The next 11 membrane-spanning stretches (helical) occupy residues 32 to 52 (IILG…RVAT), 67 to 87 (FTKL…LILS), 100 to 120 (FAVA…ALSF), 163 to 183 (YAGV…LELQ), 197 to 217 (SPEE…IGIF), 271 to 291 (ALIV…GFQY), 316 to 336 (GLIG…ALFW), 386 to 406 (FHGL…CFLL), 412 to 432 (LAFI…TAIA), 493 to 513 (LLIM…VVAF), and 534 to 554 (LLTN…AAFV). Residues 284-551 (IAMIGFQYAQ…MFQSVPAVIA (268 aa)) enclose the ABC transmembrane type-1 1 domain. The ABC transporter 1 domain occupies 605–834 (ISIVDGSFGW…GIYIPTLGLS (230 aa)). An ATP-binding site is contributed by 638-645 (GPVASGKS). N-linked (GlcNAc...) asparagine glycans are attached at residues N682, N696, N763, N784, and N843. A run of 4 helical transmembrane segments spans residues 900–920 (LLSG…MGWW), 938–958 (LFRG…VIFM), 1003–1023 (GELP…FAMA), and 1024–1044 (VVVA…FSII). The ABC transmembrane type-1 2 domain maps to 900 to 1139 (LLSGIMYAVG…VGVVAISTQL (240 aa)). N1101 carries an N-linked (GlcNAc...) asparagine glycan. Residues 1116–1136 (FLATFLNLIVMVLAVGVVAIS) traverse the membrane as a helical segment. In terms of domain architecture, ABC transporter 2 spans 1218–1468 (YKNDDESPAS…EGSWFSQLWA (251 aa)). Residue 1255–1262 (GRTGSGKS) participates in ATP binding. N-linked (GlcNAc...) asparagine glycosylation is found at N1277 and N1293.

Belongs to the ABC transporter superfamily. ABCC family. Conjugate transporter (TC 3.A.1.208) subfamily.

The protein resides in the cell membrane. The protein operates within secondary metabolite biosynthesis. Functionally, ABC transporter; part of the Fg3_54/C64 gene cluster that mediates the biosynthesis of the octapeptide fusaoctaxin A, a virulence factor that is required for cell-to-cell invasiveness of plant host. The 2 nonribosomal peptide synthetases NRPS9 and NRPS5 form an assembly line which likely utilizes GABA as a starter unit (loaded on the unique module M1 of NRPS9) and sequentially incorporates seven extender units composed of the residues L-Ala, L-allo-Ile, L-Ser, L-Val, L-Ser, L-Leu and L-Leu, respectively. During the process, each of the residues that are tethered on modules M3-M7 of NRPS5 containing an E domain can undergo an epimerization reaction to produce a D-configuration before the transpeptidation reaction occurs. The elongation of the peptidyl chain might be terminated by module M8-mediated L-Leu incorporation, followed by R domain-catalyzed 4 electron reduction to release the resulting octapeptide from the assembly line as an alcohol. Fusaoctaxin A is cleaved by the cluster specific ABC transporter FGM5 to the pentapeptide fusapentaxin A and the tripeptide fusatrixin A. The other enzymes from the cluster, FGM1, FGM2, FGM3 and FGM9 seem not to be involved in the biosynthesis of fusaoctaxin A and their functions have still to be determined. This chain is ABC transporter FGM5, found in Gibberella zeae (strain ATCC MYA-4620 / CBS 123657 / FGSC 9075 / NRRL 31084 / PH-1) (Wheat head blight fungus).